Consider the following 267-residue polypeptide: GTP cyclohydrolase FolE2 (267 aa).

The protein belongs to the GTP cyclohydrolase IV family.

The enzyme catalyses GTP + H2O = 7,8-dihydroneopterin 3'-triphosphate + formate + H(+). It functions in the pathway cofactor biosynthesis; 7,8-dihydroneopterin triphosphate biosynthesis; 7,8-dihydroneopterin triphosphate from GTP: step 1/1. In terms of biological role, converts GTP to 7,8-dihydroneopterin triphosphate. This is GTP cyclohydrolase FolE2 from Geobacter sp. (strain M21).